The primary structure comprises 292 residues: Probable deoxyhypusine synthase (292 aa).

Lys-267 acts as the Nucleophile in catalysis.

This sequence belongs to the deoxyhypusine synthase family. It depends on NAD(+) as a cofactor.

It catalyses the reaction [eIF5A protein]-L-lysine + spermidine = [eIF5A protein]-deoxyhypusine + propane-1,3-diamine. It functions in the pathway protein modification; eIF5A hypusination. Its function is as follows. Catalyzes the NAD-dependent oxidative cleavage of spermidine and the subsequent transfer of the butylamine moiety of spermidine to the epsilon-amino group of a specific lysine residue of the eIF-5A precursor protein to form the intermediate deoxyhypusine residue. This chain is Probable deoxyhypusine synthase (dys), found in Pyrobaculum aerophilum (strain ATCC 51768 / DSM 7523 / JCM 9630 / CIP 104966 / NBRC 100827 / IM2).